The sequence spans 553 residues: Glycerol-3-phosphate dehydrogenase (553 aa).

An FAD-binding site is contributed by 13–41 (DLIVIGGGINGVGTARDGALRGLKTLLIE).

This sequence belongs to the FAD-dependent glycerol-3-phosphate dehydrogenase family. The cofactor is FAD.

It localises to the cytoplasm. It carries out the reaction a quinone + sn-glycerol 3-phosphate = dihydroxyacetone phosphate + a quinol. This chain is Glycerol-3-phosphate dehydrogenase (glpD), found in Synechocystis sp. (strain ATCC 27184 / PCC 6803 / Kazusa).